The primary structure comprises 154 residues: Transcriptional repressor NrdR (154 aa).

The segment at 3 to 34 (CPHCHKNGSRVVDSRPSEDGSFIRRRRECIHC) is a zinc-finger region. One can recognise an ATP-cone domain in the interval 49 to 139 (LLVIKKDGTR…VYRQFKDVDA (91 aa)).

Belongs to the NrdR family. Zn(2+) is required as a cofactor.

Negatively regulates transcription of bacterial ribonucleotide reductase nrd genes and operons by binding to NrdR-boxes. The chain is Transcriptional repressor NrdR from Limosilactobacillus reuteri (strain DSM 20016) (Lactobacillus reuteri).